We begin with the raw amino-acid sequence, 500 residues long: Probable cytosol aminopeptidase (500 aa).

Mn(2+) is bound by residues lysine 264 and aspartate 269. Lysine 276 is an active-site residue. Aspartate 287, aspartate 346, and glutamate 348 together coordinate Mn(2+). Arginine 350 is a catalytic residue.

It belongs to the peptidase M17 family. Mn(2+) serves as cofactor.

It is found in the cytoplasm. The catalysed reaction is Release of an N-terminal amino acid, Xaa-|-Yaa-, in which Xaa is preferably Leu, but may be other amino acids including Pro although not Arg or Lys, and Yaa may be Pro. Amino acid amides and methyl esters are also readily hydrolyzed, but rates on arylamides are exceedingly low.. It carries out the reaction Release of an N-terminal amino acid, preferentially leucine, but not glutamic or aspartic acids.. Presumably involved in the processing and regular turnover of intracellular proteins. Catalyzes the removal of unsubstituted N-terminal amino acids from various peptides. The protein is Probable cytosol aminopeptidase of Nitrobacter hamburgensis (strain DSM 10229 / NCIMB 13809 / X14).